The chain runs to 526 residues: MDIYAVAVGRVGVELDAAQLERVRATHLRVQGWGMEKYPMYGVNTGFGELINVIIPPQFKSDLQHNLLRSHAAGGGEPFPDEVVRAIMTVRINCLMKGYSGISPEALQLLATMLNRGIHPVIPMQGSLGASGDLAPLSHMALPLIGDGHVRKNGVTRPTMEVFQEEGLTPLKLGFKEGLALVNGTSAMTGAASLALYRARHLLRLSLLASADIVQAMNASTRPFSHTGNALKNHPGQVVIARLMRDLTQGTGLMRDHQDIMRAISERTSHSNDVEETEIYLQNAYSLRCMPQVLGVVLETLQMCQRFIEEEANSVNDNPVILDTPAETYHGANFHGQYVAMACDYLSIAVAEMGVLAERQLNRLLDPHINKPLPGFLAHAKTGLFCGFEGGQYLATSIASENLDLAAPSSIKSIPSNGQNQDIVSMGLIAARKTLALCENVGTILSVLMAALNQASHFTEAAKYSAPIRSIHEKLGKVAPRYEDERPMSTVIAQVRGVLLQEQGLALAQSLVNLDLTPDLSLEPRA.

Tyr-41 serves as the catalytic Proton donor/acceptor. Substrate is bound at residue His-71. The segment at residues 130-132 (ASG) is a cross-link (5-imidazolinone (Ala-Gly)). Position 131 is a 2,3-didehydroalanine (Ser) (Ser-131). Asn-183 and Arg-288 together coordinate substrate.

Belongs to the TAL/TAM family. In terms of assembly, homotetramer; dimer of dimers. Post-translationally, contains an active site 4-methylidene-imidazol-5-one (MIO), which is formed autocatalytically by cyclization and dehydration of residues Ala-Ser-Gly.

The enzyme catalyses L-tyrosine = 3-amino-3-(4-hydroxyphenyl)propanoate. It catalyses the reaction L-tyrosine = (E)-4-coumarate + NH4(+). Its function is as follows. Has aminomutase and, to a much lesser extent, ammonia-lyase activity. Primarily, catalyzes the rearrangement of L-tyrosine to S-beta-tyrosine, which is probably incorporated into secondary metabolite myxovalargin. The aminomutase activity exclusively produces S-beta-tyrosine. The chain is Tyrosine 2,3-aminomutase from Myxococcus fulvus.